A 607-amino-acid chain; its full sequence is Phosphatidylinositol 4-kinase LSB6 (607 aa).

Polar residues predominate over residues 73-88 (NVPSESPRPDQTSGSN). Residues 73–93 (NVPSESPRPDQTSGSNPAVGL) form a disordered region. In terms of domain architecture, PI3K/PI4K catalytic spans 161-522 (GRELERIQTG…LVRRTRCQVI (362 aa)). Residues 167–173 (IQTGSSG) are G-loop. Positions 318-356 (KSSGEDINHKPETTRNLTDETEPSKQINSSPISTESEEN) are disordered. Residues 319-330 (SSGEDINHKPET) are compositionally biased toward basic and acidic residues. Positions 341 to 351 (SKQINSSPIST) are enriched in polar residues. The tract at residues 384-392 (RNTDRGLDN) is catalytic loop. Residues 411-431 (AIDNGLSFPWKHPDEWRLYPY) are activation loop.

This sequence belongs to the PI3/PI4-kinase family. In terms of assembly, interacts with LAS17. Mg(2+) serves as cofactor. The cofactor is Mn(2+).

The protein localises to the cell membrane. Its subcellular location is the vacuole membrane. It carries out the reaction a 1,2-diacyl-sn-glycero-3-phospho-(1D-myo-inositol) + ATP = a 1,2-diacyl-sn-glycero-3-phospho-(1D-myo-inositol 4-phosphate) + ADP + H(+). Functionally, may play a role in endocytic and/or exocytic pathways. This Saccharomyces cerevisiae (strain ATCC 204508 / S288c) (Baker's yeast) protein is Phosphatidylinositol 4-kinase LSB6 (LSB6).